The sequence spans 126 residues: Small ribosomal subunit protein uS13 (126 aa).

The interval 92-126 is disordered; that stretch reads HRMGLPVRGQRTRTNARTRRGRRQTVAGKKKAPGK. The segment covering 101 to 126 has biased composition (basic residues); sequence QRTRTNARTRRGRRQTVAGKKKAPGK.

It belongs to the universal ribosomal protein uS13 family. As to quaternary structure, part of the 30S ribosomal subunit. Forms a loose heterodimer with protein S19. Forms two bridges to the 50S subunit in the 70S ribosome.

Located at the top of the head of the 30S subunit, it contacts several helices of the 16S rRNA. In the 70S ribosome it contacts the 23S rRNA (bridge B1a) and protein L5 of the 50S subunit (bridge B1b), connecting the 2 subunits; these bridges are implicated in subunit movement. Contacts the tRNAs in the A and P-sites. This Nostoc punctiforme (strain ATCC 29133 / PCC 73102) protein is Small ribosomal subunit protein uS13.